A 512-amino-acid chain; its full sequence is Maturase K (512 aa).

Belongs to the intron maturase 2 family. MatK subfamily.

It localises to the plastid. The protein resides in the chloroplast. Functionally, usually encoded in the trnK tRNA gene intron. Probably assists in splicing its own and other chloroplast group II introns. The chain is Maturase K from Daucus carota (Wild carrot).